A 217-amino-acid polypeptide reads, in one-letter code: Probable GTP-binding protein EngB (217 aa).

Positions 33 to 217 (GPTEIAFAGR…RAAIELAVAR (185 aa)) constitute an EngB-type G domain. Residues 41 to 48 (GRSNVGKS), 68 to 72 (GRTQE), 95 to 98 (DMPG), 162 to 165 (TKTD), and 196 to 198 (TSS) contribute to the GTP site. The Mg(2+) site is built by serine 48 and threonine 70.

Belongs to the TRAFAC class TrmE-Era-EngA-EngB-Septin-like GTPase superfamily. EngB GTPase family. Mg(2+) serves as cofactor.

Its function is as follows. Necessary for normal cell division and for the maintenance of normal septation. This is Probable GTP-binding protein EngB from Sinorhizobium medicae (strain WSM419) (Ensifer medicae).